The sequence spans 449 residues: MAQFFKAKPNSSKQLSAKQSFSVHQLDHLGAGIAQHQGKVVFIPGALPSETVQAQLTEQKKNYARAKLIKVETPSAERVTPLCPHYQSCGGCDLQHMSLAGQREHKSAALVDIMAKFAGAEGNSVPALTGEGWHYRRRARLATLFDKNTKQLSLGFRASSSNQVVPIDSCLVLAKPLSDLIAPFAKLLNQLAAKSSLGHLELIDADNGHFAVIRITKSLNDKDMAKLAQFAEHHQIHICLQDNNGEFHGVNGTLLLPVYQLLDDKAGATPVSLTFTPGNFVQVNAQINKAMVAQALDWLAPQPGERILDLFCGMGNFSLPLAKLGAEVIGVEGVPDMVSQARENAAANGLSNLTFYHGDLSADLSCEPWMGKIDKLLLDPARAGAFESLQWLKKMKPRQVVYVSCNPASLARDSAVLLERGYKLQKLGLIDMFPQTHHIEAMALFELAK.

One can recognise a TRAM domain in the interval 12 to 70; the sequence is SKQLSAKQSFSVHQLDHLGAGIAQHQGKVVFIPGALPSETVQAQLTEQKKNYARAKLIK. 4 residues coordinate [4Fe-4S] cluster: Cys83, Cys89, Cys92, and Cys170. S-adenosyl-L-methionine-binding residues include Gln282, Phe311, Asn316, Glu332, Asp359, and Asp379. Catalysis depends on Cys405, which acts as the Nucleophile.

It belongs to the class I-like SAM-binding methyltransferase superfamily. RNA M5U methyltransferase family. RlmD subfamily.

The enzyme catalyses uridine(1939) in 23S rRNA + S-adenosyl-L-methionine = 5-methyluridine(1939) in 23S rRNA + S-adenosyl-L-homocysteine + H(+). In terms of biological role, catalyzes the formation of 5-methyl-uridine at position 1939 (m5U1939) in 23S rRNA. The chain is 23S rRNA (uracil(1939)-C(5))-methyltransferase RlmD from Shewanella sp. (strain MR-4).